A 372-amino-acid chain; its full sequence is tRNA 2-selenouridine synthase (372 aa).

Residues 19 to 142 form the Rhodanese domain; the sequence is LASGHPIMDV…MRQYLIDTID (124 aa). C102 functions as the S-selanylcysteine intermediate in the catalytic mechanism.

Belongs to the SelU family. Monomer.

It carries out the reaction 5-methylaminomethyl-2-thiouridine(34) in tRNA + selenophosphate + (2E)-geranyl diphosphate + H2O + H(+) = 5-methylaminomethyl-2-selenouridine(34) in tRNA + (2E)-thiogeraniol + phosphate + diphosphate. The enzyme catalyses 5-methylaminomethyl-2-thiouridine(34) in tRNA + (2E)-geranyl diphosphate = 5-methylaminomethyl-S-(2E)-geranyl-thiouridine(34) in tRNA + diphosphate. It catalyses the reaction 5-methylaminomethyl-S-(2E)-geranyl-thiouridine(34) in tRNA + selenophosphate + H(+) = 5-methylaminomethyl-2-(Se-phospho)selenouridine(34) in tRNA + (2E)-thiogeraniol. The catalysed reaction is 5-methylaminomethyl-2-(Se-phospho)selenouridine(34) in tRNA + H2O = 5-methylaminomethyl-2-selenouridine(34) in tRNA + phosphate. Involved in the post-transcriptional modification of the uridine at the wobble position (U34) of tRNA(Lys), tRNA(Glu) and tRNA(Gln). Catalyzes the conversion of 2-thiouridine (S2U-RNA) to 2-selenouridine (Se2U-RNA). Acts in a two-step process involving geranylation of 2-thiouridine (S2U) to S-geranyl-2-thiouridine (geS2U) and subsequent selenation of the latter derivative to 2-selenouridine (Se2U) in the tRNA chain. The sequence is that of tRNA 2-selenouridine synthase from Shewanella loihica (strain ATCC BAA-1088 / PV-4).